The sequence spans 112 residues: U-scoloptoxin(16)-Er5a (112 aa).

A signal peptide spans 1 to 26 (MNTVSVVQFLAVGCAVFVLYGRGVFA).

Belongs to the scoloptoxin-16 family. Contains 2 disulfide bonds. As to expression, expressed by the venom gland.

It is found in the secreted. This is U-scoloptoxin(16)-Er5a from Ethmostigmus rubripes (Giant centipede).